The sequence spans 611 residues: TANK-binding kinase 1-binding protein 1 (611 aa).

The tract at residues M1–C280 is homodimerization. Residues Y48 to I162 adopt a coiled-coil conformation. A Phosphoserine modification is found at S184. Residues T218 to Q277 adopt a coiled-coil conformation. The interaction with TBK1 and IKBKE stretch occupies residues D281 to N330. A disordered region spans residues A328–L437. Residues P346 to A361 show a composition bias toward pro residues. Low complexity predominate over residues P362–S372. A phosphoserine mark is found at S365, S372, S379, S385, S400, and S415. Residues P389–C406 are compositionally biased toward pro residues. The segment covering P416–G433 has biased composition (pro residues). S500 and S530 each carry phosphoserine. The UBZ1-type zinc finger occupies I579–H605. C582, C585, H601, and H605 together coordinate Zn(2+).

As to quaternary structure, homodimer. May form a heterodimer with NAP1. Interacts with TKB1 and IKBKE. Weakly interacts with DDX3X.

In terms of biological role, adapter protein which constitutively binds TBK1 and IKBKE playing a role in antiviral innate immunity. Essential for the efficient induction of IRF-dependent transcription following infection with Sendai virus. This chain is TANK-binding kinase 1-binding protein 1, found in Mus musculus (Mouse).